Here is a 67-residue protein sequence, read N- to C-terminus: Large ribosomal subunit protein bL32 (67 aa).

A compositionally biased stretch (basic residues) spans 1–19 (MAVPKRKMSRANTRARRAQ). Residues 1-20 (MAVPKRKMSRANTRARRAQW) form a disordered region.

It belongs to the bacterial ribosomal protein bL32 family.

This Paenarthrobacter aurescens (strain TC1) protein is Large ribosomal subunit protein bL32.